Consider the following 358-residue polypeptide: UDP-N-acetylglucosamine--N-acetylmuramyl-(pentapeptide) pyrophosphoryl-undecaprenol N-acetylglucosamine transferase (358 aa).

Residues 11-13 (TAG), Asn125, Arg162, Ser196, and Gln288 contribute to the UDP-N-acetyl-alpha-D-glucosamine site.

Belongs to the glycosyltransferase 28 family. MurG subfamily.

It localises to the cell membrane. It carries out the reaction di-trans,octa-cis-undecaprenyl diphospho-N-acetyl-alpha-D-muramoyl-L-alanyl-D-glutamyl-meso-2,6-diaminopimeloyl-D-alanyl-D-alanine + UDP-N-acetyl-alpha-D-glucosamine = di-trans,octa-cis-undecaprenyl diphospho-[N-acetyl-alpha-D-glucosaminyl-(1-&gt;4)]-N-acetyl-alpha-D-muramoyl-L-alanyl-D-glutamyl-meso-2,6-diaminopimeloyl-D-alanyl-D-alanine + UDP + H(+). It functions in the pathway cell wall biogenesis; peptidoglycan biosynthesis. Functionally, cell wall formation. Catalyzes the transfer of a GlcNAc subunit on undecaprenyl-pyrophosphoryl-MurNAc-pentapeptide (lipid intermediate I) to form undecaprenyl-pyrophosphoryl-MurNAc-(pentapeptide)GlcNAc (lipid intermediate II). This chain is UDP-N-acetylglucosamine--N-acetylmuramyl-(pentapeptide) pyrophosphoryl-undecaprenol N-acetylglucosamine transferase, found in Leifsonia xyli subsp. xyli (strain CTCB07).